We begin with the raw amino-acid sequence, 408 residues long: Centromere protein U (408 aa).

A compositionally biased stretch (basic residues) spans 1 to 33 (DRPRPARLSHARFSKNHSGRTHSMKDKAGRKHR). The disordered stretch occupies residues 1 to 218 (DRPRPARLSH…GKRKKPRSYT (218 aa)). T72 is subject to Phosphothreonine; by PLK1. The residue at position 92 (T92) is a Phosphothreonine. Residues 94 to 103 (QEKEAKRSSD) show a composition bias toward basic and acidic residues. Phosphoserine is present on S102. T104 carries the phosphothreonine modification. Phosphoserine is present on residues S105, S110, and S114. Basic residues predominate over residues 118-127 (SAKKPRRKLK). Phosphoserine occurs at positions 130, 133, and 135. A compositionally biased stretch (polar residues) spans 176–186 (PQKTGPQSAES). A Glycyl lysine isopeptide (Lys-Gly) (interchain with G-Cter in SUMO2) cross-link involves residue K178. S183 and S187 each carry phosphoserine. T192 is subject to Phosphothreonine. S222 is subject to Phosphoserine. Residues 273-350 (SNLKEELIKM…LRKAAYFLSN (78 aa)) are a coiled coil. A Nuclear localization signal motif is present at residues 293-310 (KRKNAKIISNIEKKRQRL).

It belongs to the CENP-U/AME1 family. In terms of assembly, component of the CENPA-NAC complex, at least composed of CENPA, CENPC, CENPH, CENPM, CENPN, CENPT and CENPU. The CENPA-NAC complex interacts with the CENPA-CAD complex, composed of CENPI, CENPK, CENPL, CENPO, CENPP, CENPQ, CENPR and CENPS. Interacts with MLF1. Post-translationally, phosphorylated by PLK1 at Thr-72, creating a self-tethering site that specifically interacts with the polo-box domain of PLK1.

It is found in the cytoplasm. The protein resides in the nucleus. The protein localises to the chromosome. Its subcellular location is the centromere. It localises to the kinetochore. Functionally, component of the CENPA-NAC (nucleosome-associated) complex, a complex that plays a central role in assembly of kinetochore proteins, mitotic progression and chromosome segregation. The CENPA-NAC complex recruits the CENPA-CAD (nucleosome distal) complex and may be involved in incorporation of newly synthesized CENPA into centromeres. Plays an important role in the correct PLK1 localization to the mitotic kinetochores. A scaffold protein responsible for the initial recruitment and maintenance of the kinetochore PLK1 population until its degradation. Involved in transcriptional repression. The protein is Centromere protein U (CENPU) of Bos taurus (Bovine).